Reading from the N-terminus, the 259-residue chain is Deoxyribose-phosphate aldolase (259 aa).

Aspartate 102 acts as the Proton donor/acceptor in catalysis. The active-site Schiff-base intermediate with acetaldehyde is lysine 167. Lysine 201 acts as the Proton donor/acceptor in catalysis.

The protein belongs to the DeoC/FbaB aldolase family. DeoC type 2 subfamily.

It is found in the cytoplasm. The catalysed reaction is 2-deoxy-D-ribose 5-phosphate = D-glyceraldehyde 3-phosphate + acetaldehyde. It participates in carbohydrate degradation; 2-deoxy-D-ribose 1-phosphate degradation; D-glyceraldehyde 3-phosphate and acetaldehyde from 2-deoxy-alpha-D-ribose 1-phosphate: step 2/2. Catalyzes a reversible aldol reaction between acetaldehyde and D-glyceraldehyde 3-phosphate to generate 2-deoxy-D-ribose 5-phosphate. The chain is Deoxyribose-phosphate aldolase from Escherichia fergusonii (strain ATCC 35469 / DSM 13698 / CCUG 18766 / IAM 14443 / JCM 21226 / LMG 7866 / NBRC 102419 / NCTC 12128 / CDC 0568-73).